We begin with the raw amino-acid sequence, 330 residues long: Polygalacturonase inhibitor 1 (330 aa).

The signal sequence occupies residues 1–21; that stretch reads MDKTATLCLLFLFTFLTTCLS. 2 disulfide bridges follow: cysteine 25-cysteine 55 and cysteine 56-cysteine 63. LRR repeat units follow at residues 69 to 93, 94 to 117, 118 to 142, 143 to 166, 167 to 189, 191 to 215, 217 to 237, 238 to 260, 261 to 285, and 287 to 309; these read NHRV…VGDL, PYLE…TIAK, LKNL…ISQL, KNLE…LSTL, PKIL…SFGS, PGTV…LGNI, FNRI…LFGS, NKTT…KVDI, PKTL…WTEA, and LQFF…KLQT. Residues asparagine 106 and asparagine 130 are each glycosylated (N-linked (GlcNAc...) asparagine). Asparagine 238 is a glycosylation site (N-linked (GlcNAc...) asparagine). Residue asparagine 291 is glycosylated (N-linked (GlcNAc...) asparagine). 2 disulfides stabilise this stretch: cysteine 298–cysteine 320 and cysteine 322–cysteine 329.

Belongs to the polygalacturonase-inhibiting protein family.

The protein resides in the secreted. It is found in the cell wall. The protein localises to the membrane. In terms of biological role, inhibitor of fungal polygalacturonase. It is an important factor for plant resistance to phytopathogenic fungi. In Arabidopsis thaliana (Mouse-ear cress), this protein is Polygalacturonase inhibitor 1 (PGIP1).